A 499-amino-acid chain; its full sequence is Glycerol kinase (499 aa).

Thr-17 is an ADP binding site. 3 residues coordinate ATP: Thr-17, Thr-18, and Ser-19. A sn-glycerol 3-phosphate-binding site is contributed by Thr-17. Arg-21 serves as a coordination point for ADP. Positions 87, 88, 139, and 243 each coordinate sn-glycerol 3-phosphate. Residues Arg-87, Glu-88, Tyr-139, Asp-243, and Gln-244 each coordinate glycerol. ADP is bound by residues Thr-265 and Gly-308. ATP is bound by residues Thr-265, Gly-308, Gln-312, and Gly-409. The ADP site is built by Gly-409 and Asn-413.

Belongs to the FGGY kinase family.

The catalysed reaction is glycerol + ATP = sn-glycerol 3-phosphate + ADP + H(+). Its pathway is polyol metabolism; glycerol degradation via glycerol kinase pathway; sn-glycerol 3-phosphate from glycerol: step 1/1. Its activity is regulated as follows. Inhibited by fructose 1,6-bisphosphate (FBP). In terms of biological role, key enzyme in the regulation of glycerol uptake and metabolism. Catalyzes the phosphorylation of glycerol to yield sn-glycerol 3-phosphate. The chain is Glycerol kinase from Pseudomonas entomophila (strain L48).